A 212-amino-acid chain; its full sequence is Golgi-associated RAB2 interactor protein 5A (212 aa).

Disordered stretches follow at residues 1 to 21 and 162 to 212; these read MKGGRDLKAARGGADRPLAPA and PFTH…LWGL. The span at 169–185 shows a compositional bias: acidic residues; the sequence is APEEEEEEEEEEEEEEV.

The protein belongs to the GARIN family. As to quaternary structure, interacts (via N-terminus) with RAB2B (in GTP-bound form). As to expression, expressed in testis (at protein level).

It localises to the golgi apparatus. Its function is as follows. RAB2B effector protein which promotes cytosolic DNA-induced innate immune responses. Regulates IFN responses against DNA viruses by regulating the CGAS-STING signaling axis. The protein is Golgi-associated RAB2 interactor protein 5A of Mus musculus (Mouse).